A 155-amino-acid polypeptide reads, in one-letter code: Small ribosomal subunit protein uS7 (155 aa).

It belongs to the universal ribosomal protein uS7 family. As to quaternary structure, part of the 30S ribosomal subunit. Contacts proteins S9 and S11.

In terms of biological role, one of the primary rRNA binding proteins, it binds directly to 16S rRNA where it nucleates assembly of the head domain of the 30S subunit. Is located at the subunit interface close to the decoding center, probably blocks exit of the E-site tRNA. The sequence is that of Small ribosomal subunit protein uS7 from Helicobacter pylori (strain Shi470).